The chain runs to 435 residues: Methylenetetrahydrofolate--tRNA-(uracil-5-)-methyltransferase TrmFO (435 aa).

9–14 (GAGLAG) lines the FAD pocket.

The protein belongs to the MnmG family. TrmFO subfamily. FAD is required as a cofactor.

Its subcellular location is the cytoplasm. It catalyses the reaction uridine(54) in tRNA + (6R)-5,10-methylene-5,6,7,8-tetrahydrofolate + NADH + H(+) = 5-methyluridine(54) in tRNA + (6S)-5,6,7,8-tetrahydrofolate + NAD(+). It carries out the reaction uridine(54) in tRNA + (6R)-5,10-methylene-5,6,7,8-tetrahydrofolate + NADPH + H(+) = 5-methyluridine(54) in tRNA + (6S)-5,6,7,8-tetrahydrofolate + NADP(+). Its function is as follows. Catalyzes the folate-dependent formation of 5-methyl-uridine at position 54 (M-5-U54) in all tRNAs. The protein is Methylenetetrahydrofolate--tRNA-(uracil-5-)-methyltransferase TrmFO of Staphylococcus epidermidis (strain ATCC 35984 / DSM 28319 / BCRC 17069 / CCUG 31568 / BM 3577 / RP62A).